Reading from the N-terminus, the 1873-residue chain is SAGA complex subunit Spt20 (1873 aa).

Belongs to the SPT20 family. As to quaternary structure, component of the Spt-Ada-Gcn5 acetyltransferase (SAGA) complex consisting of wda/Taf5L, Saf6, Taf9, Taf10b, Taf12, Ada1, Spt3, Spt7, Spt20, Sf3b3, Sf3b5, Nipped-A/Tra1, a histone acetyltransferase (HAT) module made up of Gcn5, Ada2b (Isoform B), Ada3 and Sgf29, and a deubiquitinase (DUB) module made up of not/nonstop, Sgf11 and e(y)2 tethered to SAGA by Atxn7.

The protein localises to the nucleus. Its function is as follows. Component of the transcription regulatory complex SAGA, a multiprotein complex that activates transcription by remodeling chromatin and mediating histone acetylation and deubiquitination. The SAGA complex predominantly acetylates histone H3. The polypeptide is SAGA complex subunit Spt20 (Drosophila melanogaster (Fruit fly)).